A 745-amino-acid chain; its full sequence is Elongation factor G, mitochondrial (745 aa).

The tr-type G domain occupies 40-317 (ERIRNIGISA…AVLDYLPNPG (278 aa)). Residues 49-56 (AHIDSGKT), 116-120 (DTPGH), and 170-173 (NKLD) contribute to the GTP site.

The protein belongs to the TRAFAC class translation factor GTPase superfamily. Classic translation factor GTPase family. EF-G/EF-2 subfamily.

The protein localises to the mitochondrion. It functions in the pathway protein biosynthesis; polypeptide chain elongation. In terms of biological role, mitochondrial GTPase that catalyzes the GTP-dependent ribosomal translocation step during translation elongation. During this step, the ribosome changes from the pre-translocational (PRE) to the post-translocational (POST) state as the newly formed A-site-bound peptidyl-tRNA and P-site-bound deacylated tRNA move to the P and E sites, respectively. Catalyzes the coordinated movement of the two tRNA molecules, the mRNA and conformational changes in the ribosome. Essential during development as it acts as a retrograde signal from mitochondria to the nucleus to slow down cell proliferation if mitochondrial energy output is low. The polypeptide is Elongation factor G, mitochondrial (Drosophila yakuba (Fruit fly)).